The primary structure comprises 573 residues: DNA ligase (573 aa).

E250 provides a ligand contact to ATP. K252 (N6-AMP-lysine intermediate) is an active-site residue. Residues R257, R272, E301, F342, R432, and K438 each coordinate ATP.

Belongs to the ATP-dependent DNA ligase family. Mg(2+) is required as a cofactor.

It carries out the reaction ATP + (deoxyribonucleotide)n-3'-hydroxyl + 5'-phospho-(deoxyribonucleotide)m = (deoxyribonucleotide)n+m + AMP + diphosphate.. In terms of biological role, DNA ligase that seals nicks in double-stranded DNA during DNA replication, DNA recombination and DNA repair. This Methanococcus vannielii (strain ATCC 35089 / DSM 1224 / JCM 13029 / OCM 148 / SB) protein is DNA ligase.